Consider the following 322-residue polypeptide: Ferredoxin--NADP reductase (322 aa).

FAD is bound by residues Asp33, Gln41, Tyr46, Ala86, Phe120, Asp278, and Ser319.

It belongs to the ferredoxin--NADP reductase type 2 family. As to quaternary structure, homodimer. FAD serves as cofactor.

The enzyme catalyses 2 reduced [2Fe-2S]-[ferredoxin] + NADP(+) + H(+) = 2 oxidized [2Fe-2S]-[ferredoxin] + NADPH. In Salinispora tropica (strain ATCC BAA-916 / DSM 44818 / JCM 13857 / NBRC 105044 / CNB-440), this protein is Ferredoxin--NADP reductase.